The chain runs to 148 residues: Arginine repressor (148 aa).

The protein belongs to the ArgR family.

The protein localises to the cytoplasm. It functions in the pathway amino-acid biosynthesis; L-arginine biosynthesis [regulation]. Regulates arginine biosynthesis genes. The chain is Arginine repressor from Koribacter versatilis (strain Ellin345).